Consider the following 1163-residue polypeptide: Zinc finger protein 516 (1163 aa).

Over residues 1–13 the composition is skewed to basic and acidic residues; sequence MDRNREAEMELRR. The disordered stretch occupies residues 1–26; the sequence is MDRNREAEMELRRGPSPTRAGRGHEV. The tract at residues 1 to 431 is mediates promoter DNA-binding and activation of transcription; sequence MDRNREAEME…ATRGKVAEPA (431 aa). 7 C2H2-type zinc fingers span residues 34 to 56, 62 to 84, 174 to 197, 200 to 223, 248 to 270, 276 to 298, and 335 to 357; these read HTCC…MRKH, YKCP…IRSH, VQCS…HQAH, FKCR…ERDH, FPCE…MKKH, HGCH…MKAH, and EVCA…NAIH. The segment covering 460–469 has biased composition (basic and acidic residues); it reads SQEKRKREQD. Disordered stretches follow at residues 460–512, 533–667, and 679–730; these read SQEK…TGQG, HSRV…QEQH, and HPKQ…APDL. Over residues 496 to 507 the composition is skewed to low complexity; that stretch reads RSAARPNRRAAA. A C2H2-type 8 zinc finger spans residues 515 to 537; that stretch reads SECFECGKIFRTYHQMVLHSRVH. A compositionally biased stretch (basic and acidic residues) spans 542–552; that stretch reads RERDSDGDRAA. Over residues 561 to 572 the composition is skewed to polar residues; that stretch reads EGDSASQPSSPG. Positions 588-598 are enriched in acidic residues; it reads EAAEDSGEEGA. Over residues 615-625 the composition is skewed to polar residues; sequence EVTSTELSSGD. Basic and acidic residues predominate over residues 626-641; the sequence is QSHKMGDNASERDTGE. A Glycyl lysine isopeptide (Lys-Gly) (interchain with G-Cter in SUMO2) cross-link involves residue lysine 643. Residues 656–667 are compositionally biased toward basic and acidic residues; it reads SSRETSRRQEQH. Residue lysine 681 forms a Glycyl lysine isopeptide (Lys-Gly) (interchain with G-Cter in SUMO2) linkage. A compositionally biased stretch (basic and acidic residues) spans 706-720; sequence PAEKLSDLHNKEHSG. Residues 760-783 form a C2H2-type 9; atypical zinc finger; the sequence is HPCPYCSHKTYYPEVLWMHKRIWH. Positions 838–1007 are disordered; that stretch reads TQVPGGMPGS…PPREPPSKAA (170 aa). A compositionally biased stretch (low complexity) spans 840-857; that stretch reads VPGGMPGSKSGSSPLGVV. Residues lysine 1043 and lysine 1062 each participate in a glycyl lysine isopeptide (Lys-Gly) (interchain with G-Cter in SUMO2) cross-link. The segment at 1098 to 1120 adopts a C2H2-type 10 zinc-finger fold; sequence FVCIECGKSFHQPGHLRAHMRAH. Residues 1126 to 1163 form a disordered region; that stretch reads SDGPRGSEVHTTSADAPKQGRDHSNTGTVQTVPLRKGT.

It belongs to the krueppel C2H2-type zinc-finger protein family. As to quaternary structure, interacts with PRDM16; the interaction is direct and may play a role in the transcription of brown adipose tissue-specific genes. Interacts with PWWP2B. Interacts with HDAC1; this interaction is enhanced in the presence of PWWP2B.

The protein resides in the nucleus. Functionally, transcriptional regulator that binds to the promoter and activates the transcription of genes promoting brown adipose tissue (BAT) differentiation. Among brown adipose tissue-specific genes, binds the proximal region of the promoter of the UCP1 gene to activate its transcription and thereby regulate thermogenesis. May also play a role in the cellular response to replication stress. This is Zinc finger protein 516 from Homo sapiens (Human).